The following is a 282-amino-acid chain: Phosphate import ATP-binding protein PstB (282 aa).

Over residues 1-25 the composition is skewed to polar residues; it reads MKALNANISTMSEVSRSATPQSDSP. The segment at 1–26 is disordered; sequence MKALNANISTMSEVSRSATPQSDSPA. An ABC transporter domain is found at 36–277; it reads IRIANFNAWY…PQEKRTDDYV (242 aa). Residue 68 to 75 participates in ATP binding; the sequence is GPSGCGKS.

This sequence belongs to the ABC transporter superfamily. Phosphate importer (TC 3.A.1.7) family. As to quaternary structure, the complex is composed of two ATP-binding proteins (PstB), two transmembrane proteins (PstC and PstA) and a solute-binding protein (PstS).

Its subcellular location is the cell inner membrane. The catalysed reaction is phosphate(out) + ATP + H2O = ADP + 2 phosphate(in) + H(+). Functionally, part of the ABC transporter complex PstSACB involved in phosphate import. Responsible for energy coupling to the transport system. The sequence is that of Phosphate import ATP-binding protein PstB from Rhodopirellula baltica (strain DSM 10527 / NCIMB 13988 / SH1).